The chain runs to 327 residues: Thioredoxin reductase sirT (327 aa).

FAD contacts are provided by residues 15 to 18 (AGPA), 37 to 42 (DTGVFR), His50, and Ala115. A disulfide bridge connects residues Cys139 and Cys142. Residues Asp289 and 296-297 (QV) contribute to the FAD site.

The protein belongs to the class-II pyridine nucleotide-disulfide oxidoreductase family. In terms of assembly, homodimer. Requires FAD as cofactor.

It functions in the pathway mycotoxin biosynthesis. Functionally, thioredoxin reductase; part of the gene cluster that mediates the biosynthesis of sirodesmin PL, an epipolythiodioxopiperazine (ETP) characterized by a disulfide bridged cyclic dipeptide and that acts as a phytotoxin which is involved in the blackleg didease of canola. SirD catalyzes the O-prenylation of L-tyrosine (L-Tyr) in the presence of dimethylallyl diphosphate (DMAPP) to yield 4-O-dimethylallyl-L-Tyr, and therefore represents probably the first pathway-specific enzyme in the biosynthesis of sirodesmin PL. 4-O-dimethylallyl-L-Tyr, then undergoes condensation with L-Ser in a reaction catalyzed by the non-ribosomal peptide synthase sirP to form the diketopiperazine (DKP) backbone. Further bishydroxylation of the DKP performed by the cytochrome P450 monooxygenase sirC leads to the production of the intermediate phomamide. This step is essential to form the reactive thiol group required for toxicity of sirodesmin PL. The next steps of sirodesmin biosynthesis are not well understood yet, but some predictions could be made from intermediate compounds identification. Phomamide is converted into phomalizarine via oxidation, probably by sirT. Further oxidation, methylation (by sirM or sirN) and reduction steps convert phomalizarine to deacetyl sirodesmin. Finally, acetyltransferase sirH probably acetylates deacetyl sirodesmin to produce sirodesmin PL. The sequence is that of Thioredoxin reductase sirT from Leptosphaeria maculans (Blackleg fungus).